The primary structure comprises 517 residues: L-amino-acid oxidase (517 aa).

The N-terminal stretch at 1–18 (MNVFFMFSLLFLAALESC) is a signal peptide. Cys-29 and Cys-192 form a disulfide bridge. Residues 62-63 (MA), 82-83 (EA), Arg-90, and 106-109 (GPMR) each bind FAD. Arg-109 contributes to the substrate binding site. An N-linked (GlcNAc...) asparagine glycan is attached at Asn-191. Val-280 lines the FAD pocket. The cysteines at positions 350 and 431 are disulfide-linked. Tyr-391 contacts substrate. FAD contacts are provided by residues Glu-476 and 483–488 (GWIDST). A substrate-binding site is contributed by 483–484 (GW).

Belongs to the flavin monoamine oxidase family. FIG1 subfamily. As to quaternary structure, homodimer; non-covalently linked. FAD serves as cofactor. In terms of processing, N-glycosylated. Expressed by the venom gland.

The protein resides in the secreted. It catalyses the reaction an L-alpha-amino acid + O2 + H2O = a 2-oxocarboxylate + H2O2 + NH4(+). Catalyzes an oxidative deamination of predominantly hydrophobic and aromatic L-amino acids, thus producing hydrogen peroxide that may contribute to the diverse toxic effects of this enzyme. Exhibits diverse biological activities, such as hemorrhage, hemolysis, edema, apoptosis of vascular endothelial cells or tumor cell lines, antibacterial and antiparasitic activities, as well as regulation of platelet aggregation. Its effect on platelets is controversial, since it either induces aggregation or inhibits agonist-induced aggregation. These different effects are probably due to different experimental conditions. The polypeptide is L-amino-acid oxidase (Demansia vestigiata (Lesser black whip snake)).